A 497-amino-acid chain; its full sequence is Acetyltransferase FGR3 (497 aa).

Positions 221 and 224 each coordinate Ca(2+). Residues lysine 255 and aspartate 303 each coordinate CoA. Aspartate 386 contributes to the Ca(2+) binding site. Residue threonine 396 coordinates CoA. Aspartate 462 serves as a coordination point for Ca(2+). The interval aspartate 477–serine 497 is disordered. The segment covering asparagine 485 to serine 497 has biased composition (low complexity).

This sequence belongs to the trichothecene 3-O-acetyltransferase family.

The protein operates within secondary metabolite biosynthesis. Its function is as follows. Acetyltransferase; part of the gene cluster that mediates the biosynthesis of the tetraketides fugralins such as linear fugralin A and cyclic fugralin B, volatile compounds that play a role in the asexual reproductive cycle but are not involved in pathogenicity. One of the key features of fugralins is the presence of a double methyl group, which is only rarely encountered in fungal secondary metabolites. As the fugralins cluster does not contain an independent methyltransferase, the PKS FGR1 is probably responsible for adding two methyl groups to the same carbon atom. Fugralin B is similar to fugralin A except for a cyclization between the carboxylic acid C-8 and the alcohol on C-4 resulting in a six membered lactone ring, probably catalyzed by the cyclase FGR4. The exact role of the individual cluster genes remains unknown and further work is needed to unravel the biosynthetic pathway. This chain is Acetyltransferase FGR3, found in Gibberella zeae (strain ATCC MYA-4620 / CBS 123657 / FGSC 9075 / NRRL 31084 / PH-1) (Wheat head blight fungus).